The following is a 63-amino-acid chain: Large ribosomal subunit protein uL29 (63 aa).

It belongs to the universal ribosomal protein uL29 family.

In Pectobacterium carotovorum subsp. carotovorum (strain PC1), this protein is Large ribosomal subunit protein uL29.